The primary structure comprises 225 residues: Uracil-DNA glycosylase (225 aa).

Catalysis depends on Asp65, which acts as the Proton acceptor.

The protein belongs to the uracil-DNA glycosylase (UDG) superfamily. UNG family.

Its subcellular location is the cytoplasm. It carries out the reaction Hydrolyzes single-stranded DNA or mismatched double-stranded DNA and polynucleotides, releasing free uracil.. Functionally, excises uracil residues from the DNA which can arise as a result of misincorporation of dUMP residues by DNA polymerase or due to deamination of cytosine. This is Uracil-DNA glycosylase from Bacillus cereus (strain AH820).